The following is a 205-amino-acid chain: Large ribosomal subunit protein uL4 (205 aa).

The disordered stretch occupies residues 48 to 79; that stretch reads KAQKSRSDVSGGGKKPWKQKGSGHARAGTTRS.

The protein belongs to the universal ribosomal protein uL4 family. As to quaternary structure, part of the 50S ribosomal subunit.

Its function is as follows. One of the primary rRNA binding proteins, this protein initially binds near the 5'-end of the 23S rRNA. It is important during the early stages of 50S assembly. It makes multiple contacts with different domains of the 23S rRNA in the assembled 50S subunit and ribosome. Forms part of the polypeptide exit tunnel. This is Large ribosomal subunit protein uL4 from Methylococcus capsulatus (strain ATCC 33009 / NCIMB 11132 / Bath).